We begin with the raw amino-acid sequence, 484 residues long: Auxin transporter-like protein 2 (484 aa).

Residues 1–59 lie on the Cytoplasmic side of the membrane; it reads MLPQKQGEEAIVSSFNETDQQEGVVGREEEVEDHSFSVKNFLWHGGSVWDAWFSCASNQ. A helical transmembrane segment spans residues 60–77; it reads VAQVLLTLPYSFSQLGML. Topologically, residues 78 to 79 are extracellular; sequence SG. A helical membrane pass occupies residues 80-100; it reads ILLQVFYGILGSWTAYLISVL. The Cytoplasmic portion of the chain corresponds to 101 to 135; it reads YVEYRSRKEKENVNFKNHVIQWFEVLDGLLGPYWK. A helical membrane pass occupies residues 136–156; it reads ALGLAFNCTFLLFGSVIQLIA. Over 157-172 the chain is Extracellular; sequence CASNIYYINDNLDKRT. A helical transmembrane segment spans residues 173–193; the sequence is WTYIFGACCATTVFIPSFHNY. The Cytoplasmic segment spans residues 194–196; the sequence is RIW. The chain crosses the membrane as a helical span at residues 197–217; sequence SFLGLGMTTYTAWYLTIASIV. Over 218 to 232 the chain is Extracellular; sequence HGQAENVTHTGPKKL. N-linked (GlcNAc...) asparagine glycosylation is present at asparagine 223. The helical transmembrane segment at 233-253 threads the bilayer; it reads VLYFTGATNILYTFGGHAVTV. The Cytoplasmic portion of the chain corresponds to 254–266; sequence EIMHAMWKPQKFK. The chain crosses the membrane as a helical span at residues 267–287; that stretch reads YIYLMATLYVFTLTIPSATAV. Residues 288 to 314 lie on the Extracellular side of the membrane; it reads YWAFGDELLNHSNAFSLLPKNGWRDGA. Asparagine 297 carries N-linked (GlcNAc...) asparagine glycosylation. The chain crosses the membrane as a helical span at residues 315 to 335; that stretch reads VILMLIHQFITFGFACTPLYF. Topologically, residues 336 to 356 are cytoplasmic; that stretch reads VWEKVIGMHDTRSICLRALAR. The helical transmembrane segment at 357 to 377 threads the bilayer; the sequence is LPVVIPIWFLAIIFPFFGPIN. Serine 378 is a topological domain (extracellular). Residues 379-399 form a helical membrane-spanning segment; the sequence is AVGALLVSFTVYIIPSAAHML. The Cytoplasmic segment spans residues 400–425; that stretch reads TYRKASARKNAAEKPPFFMPSWTAMY. Residues 426–446 form a helical membrane-spanning segment; it reads IFNAFIVIWVLVVGFGFGGWA. At 447-484 the chain is on the extracellular side; sequence SMTNFIRQIDTFGLFAKCYQCKPPPVMAAAPPPHALHH.

It belongs to the amino acid/polyamine transporter 2 family. Amino acid/auxin permease (AAAP) (TC 2.A.18.1) subfamily. As to expression, shoots and roots of nodulating plants. Higher levels in roots, flowers and stems, lower in nodules, leaves, petioles and shoot apices.

The protein resides in the cell membrane. Carrier protein involved in proton-driven auxin influx. Mediates the formation of auxin gradient from developing leaves (site of auxin biosynthesis) to tips by contributing to the loading of auxin in vascular tissues and facilitating acropetal (base to tip) auxin transport within inner tissues of the root apex, and basipetal (tip to base) auxin transport within outer tissues of the root apex. May be involved in lateral roots and nodules formation. The protein is Auxin transporter-like protein 2 (LAX2) of Medicago truncatula (Barrel medic).